The following is a 113-amino-acid chain: Class I hydrophobin POH1 (113 aa).

Residues 1–26 form the signal peptide; that stretch reads MFSIRISTVVLAASALLAVAIPMTNT. 4 disulfide bridges follow: cysteine 31–cysteine 93, cysteine 38–cysteine 87, cysteine 39–cysteine 74, and cysteine 94–cysteine 107.

This sequence belongs to the fungal hydrophobin family. Self-assembles to form functional amyloid fibrils called rodlets. Self-assembly into fibrillar rodlets occurs spontaneously at hydrophobic:hydrophilic interfaces and the rodlets further associate laterally to form amphipathic monolayers. As to expression, expressed in the fruiting bodies but not in vegetative mycelium.

The protein resides in the secreted. The protein localises to the cell wall. Its function is as follows. Aerial growth, conidiation, and dispersal of filamentous fungi in the environment rely upon a capability of their secreting small amphipathic proteins called hydrophobins (HPBs) with low sequence identity. Class I can self-assemble into an outermost layer of rodlet bundles on aerial cell surfaces, conferring cellular hydrophobicity that supports fungal growth, development and dispersal; whereas Class II form highly ordered films at water-air interfaces through intermolecular interactions but contribute nothing to the rodlet structure. POH1 is a class I hydrophobin that is involved in the formation of mycelium knots and subsequent fruiting bodies. This chain is Class I hydrophobin POH1, found in Pleurotus ostreatus (Oyster mushroom).